The sequence spans 348 residues: Erythronate-4-phosphate dehydrogenase (348 aa).

The substrate site is built by Thr-46 and Thr-67. Residue Asp-147 coordinates NAD(+). The active site involves Arg-209. Residue Asp-233 participates in NAD(+) binding. The active site involves Glu-238. His-255 serves as the catalytic Proton donor. Gly-258 contributes to the NAD(+) binding site. Substrate is bound at residue Tyr-259.

It belongs to the D-isomer specific 2-hydroxyacid dehydrogenase family. PdxB subfamily. In terms of assembly, homodimer.

The protein resides in the cytoplasm. It catalyses the reaction 4-phospho-D-erythronate + NAD(+) = (R)-3-hydroxy-2-oxo-4-phosphooxybutanoate + NADH + H(+). It functions in the pathway cofactor biosynthesis; pyridoxine 5'-phosphate biosynthesis; pyridoxine 5'-phosphate from D-erythrose 4-phosphate: step 2/5. Functionally, catalyzes the oxidation of erythronate-4-phosphate to 3-hydroxy-2-oxo-4-phosphonooxybutanoate. This chain is Erythronate-4-phosphate dehydrogenase, found in Bacteroides fragilis (strain ATCC 25285 / DSM 2151 / CCUG 4856 / JCM 11019 / LMG 10263 / NCTC 9343 / Onslow / VPI 2553 / EN-2).